A 561-amino-acid polypeptide reads, in one-letter code: uncharacterized protein (561 aa).

A coiled-coil region spans residues aspartate 187 to isoleucine 217.

This is an uncharacterized protein from Dictyostelium discoideum (Social amoeba).